A 345-amino-acid polypeptide reads, in one-letter code: Mycothiol acetyltransferase (345 aa).

N-acetyltransferase domains are found at residues 6-149 (DTYE…KAME) and 164-345 (FEVL…RGRL). 1D-myo-inositol 2-(L-cysteinylamino)-2-deoxy-alpha-D-glucopyranoside is bound at residue glutamate 39. 76-78 (LAV) lines the acetyl-CoA pocket. Residues glutamate 198, lysine 261, and glutamate 277 each contribute to the 1D-myo-inositol 2-(L-cysteinylamino)-2-deoxy-alpha-D-glucopyranoside site. Acetyl-CoA is bound by residues 281–283 (VCL) and 288–294 (RGRGLGQ). Residue tyrosine 315 participates in 1D-myo-inositol 2-(L-cysteinylamino)-2-deoxy-alpha-D-glucopyranoside binding.

Belongs to the acetyltransferase family. MshD subfamily. As to quaternary structure, monomer.

It catalyses the reaction 1D-myo-inositol 2-(L-cysteinylamino)-2-deoxy-alpha-D-glucopyranoside + acetyl-CoA = mycothiol + CoA + H(+). Functionally, catalyzes the transfer of acetyl from acetyl-CoA to desacetylmycothiol (Cys-GlcN-Ins) to form mycothiol. This chain is Mycothiol acetyltransferase, found in Corynebacterium jeikeium (strain K411).